The chain runs to 461 residues: Elongation factor 1-alpha, oocyte form (461 aa).

G2 carries the post-translational modification N,N,N-trimethylglycine. The 238-residue stretch at 5–242 folds into the tr-type G domain; it reads KIHINIVVIG…DCIIPPQRPT (238 aa). Residues 14-21 are G1; that stretch reads GHVDSGKS. 14 to 21 serves as a coordination point for GTP; sequence GHVDSGKS. Positions 70–74 are G2; that stretch reads GITID. Residues 91–94 form a G3 region; the sequence is DAPG. Residues 91-95 and 153-156 each bind GTP; these read DAPGH and NKMD. The tract at residues 153–156 is G4; sequence NKMD. Residues 194–196 are G5; sequence SGW. A 5-glutamyl glycerylphosphorylethanolamine mark is found at E301 and E374.

The protein belongs to the TRAFAC class translation factor GTPase superfamily. Classic translation factor GTPase family. EF-Tu/EF-1A subfamily. Oocyte.

It is found in the cytoplasm. This protein promotes the GTP-dependent binding of aminoacyl-tRNA to the A-site of ribosomes during protein biosynthesis. This is Elongation factor 1-alpha, oocyte form (eef1ao) from Xenopus laevis (African clawed frog).